A 188-amino-acid polypeptide reads, in one-letter code: Ion-translocating oxidoreductase complex subunit B (188 aa).

The interval 1 to 26 (MNGVFLAIGALLPICLAGGALLGYAA) is hydrophobic. Positions 32–90 (QGDPVAEQVNALLPQTQCGQCGYPGCKPYAEAIAAGDKINKCPPGGEATIRALADLLDL) constitute a 4Fe-4S domain. Cysteine 49, cysteine 52, cysteine 57, cysteine 73, cysteine 113, cysteine 116, cysteine 119, cysteine 123, cysteine 143, cysteine 146, cysteine 149, and cysteine 153 together coordinate [4Fe-4S] cluster. 4Fe-4S ferredoxin-type domains are found at residues 104-133 (RVAYIREAECIGCTKCIQACPVDAIVGAAR) and 134-163 (LMHTVIADECTGCDLCLEPCPVDCIEMRET).

The protein belongs to the 4Fe4S bacterial-type ferredoxin family. RnfB subfamily. The complex is composed of six subunits: RnfA, RnfB, RnfC, RnfD, RnfE and RnfG. [4Fe-4S] cluster is required as a cofactor.

It is found in the cell inner membrane. Part of a membrane-bound complex that couples electron transfer with translocation of ions across the membrane. The chain is Ion-translocating oxidoreductase complex subunit B from Pseudomonas aeruginosa (strain UCBPP-PA14).